The primary structure comprises 441 residues: Anti-sigma-I factor RsgI (441 aa).

Over 1 to 53 the chain is Cytoplasmic; that stretch reads MMNKGIVMDIKKHSVVVLTPNGEFITCKRKGDSCMIGEEISFDEQEQKASRFS. The RsgI N-terminal anti-sigma domain maps to 3–51; it reads NKGIVMDIKKHSVVVLTPNGEFITCKRKGDSCMIGEEISFDEQEQKASR. The chain crosses the membrane as a helical span at residues 54-76; it reads IPYFLKPASLLVACFLCALLFFY. Residues 77–441 are Extracellular-facing; sequence NQPEEKVFAY…HQQGNEKKNQ (365 aa). The disordered stretch occupies residues 213 to 441; that stretch reads ENEKNKSVTP…HQQGNEKKNQ (229 aa). A compositionally biased stretch (polar residues) spans 219–230; the sequence is SVTPPATPSNPV. A compositionally biased stretch (low complexity) spans 240 to 251; the sequence is PDSSPDVVPDLS. Residues 252–281 show a composition bias toward basic and acidic residues; sequence SVKDKKYEKPEYKEQKKIEEQPTKQIKENN. Low complexity-rich tracts occupy residues 282 to 328, 336 to 358, and 366 to 408; these read GRGS…QQGN, NNGH…QQGN, and NNGH…NGRG. Positions 411 to 428 are enriched in polar residues; that stretch reads KENVGNEQGNNGRGSQQE. Positions 429 to 441 are enriched in basic and acidic residues; sequence NRGHQQGNEKKNQ.

In terms of assembly, interacts (via RsgI N-terminal anti-sigma domain) with SigI.

The protein resides in the cell membrane. Anti-sigma factor for SigI. Negatively regulates SigI activity through direct interaction. Has no direct effect on virulence gene expression. This is Anti-sigma-I factor RsgI from Bacillus anthracis.